Here is an 82-residue protein sequence, read N- to C-terminus: CLAVATA3/ESR (CLE)-related protein 53 (82 aa).

Residues M1–A26 form the signal peptide. Hydroxyproline is present on residues P74 and P77. P77 is a glycosylation site (O-linked (Ara...) hydroxyproline).

This sequence belongs to the CLV3/ESR signal peptide family. The O-glycosylation (arabinosylation) of the hydroxyproline Pro-77 enhances binding affinity of the CLE53p peptide for its receptor. As to expression, expressed in root vasculature.

The protein resides in the secreted. It is found in the extracellular space. Its function is as follows. Signaling peptide involved in the regulation of root colonization by arbuscular mycorrhizal (AM) fungi. Moves from root to shoot to function with the receptor kinase SUNN, in a signaling pathway that repress strigolactone biosynthetic genes and strigolactone content in the roots, and consequently reduces the promotion of further colonization by AM fungi. The sequence is that of CLAVATA3/ESR (CLE)-related protein 53 from Medicago truncatula (Barrel medic).